The following is a 143-amino-acid chain: uncharacterized protein (143 aa).

The HTH marR-type domain maps to 5–137 (DARLASDLSL…LRSAADLMLA (133 aa)). The H-T-H motif DNA-binding region spans 51 to 74 (PGALAIRERVRPPSMTRVIASLAD).

As to quaternary structure, homodimer.

This is an uncharacterized protein from Mycobacterium bovis (strain ATCC BAA-935 / AF2122/97).